The following is a 259-amino-acid chain: Indole-3-glycerol phosphate synthase (259 aa).

This sequence belongs to the TrpC family.

It catalyses the reaction 1-(2-carboxyphenylamino)-1-deoxy-D-ribulose 5-phosphate + H(+) = (1S,2R)-1-C-(indol-3-yl)glycerol 3-phosphate + CO2 + H2O. It participates in amino-acid biosynthesis; L-tryptophan biosynthesis; L-tryptophan from chorismate: step 4/5. This is Indole-3-glycerol phosphate synthase from Rhodopirellula baltica (strain DSM 10527 / NCIMB 13988 / SH1).